The chain runs to 92 residues: Small ribosomal subunit protein uS19 (92 aa).

The protein belongs to the universal ribosomal protein uS19 family.

Functionally, protein S19 forms a complex with S13 that binds strongly to the 16S ribosomal RNA. In Francisella philomiragia subsp. philomiragia (strain ATCC 25017 / CCUG 19701 / FSC 153 / O#319-036), this protein is Small ribosomal subunit protein uS19.